Reading from the N-terminus, the 340-residue chain is N-acetyl-gamma-glutamyl-phosphate reductase (340 aa).

C146 is a catalytic residue.

This sequence belongs to the NAGSA dehydrogenase family. Type 1 subfamily.

It is found in the cytoplasm. The catalysed reaction is N-acetyl-L-glutamate 5-semialdehyde + phosphate + NADP(+) = N-acetyl-L-glutamyl 5-phosphate + NADPH + H(+). Its pathway is amino-acid biosynthesis; L-arginine biosynthesis; N(2)-acetyl-L-ornithine from L-glutamate: step 3/4. Functionally, catalyzes the NADPH-dependent reduction of N-acetyl-5-glutamyl phosphate to yield N-acetyl-L-glutamate 5-semialdehyde. This Rubrobacter xylanophilus (strain DSM 9941 / JCM 11954 / NBRC 16129 / PRD-1) protein is N-acetyl-gamma-glutamyl-phosphate reductase.